The primary structure comprises 310 residues: NAD-dependent protein deacylase sirtuin-5, mitochondrial (310 aa).

The transit peptide at 1–36 (MQPLQIAPCRLLYGLYRGLKSPASTGTRICPAMARP) directs the protein to the mitochondrion. In terms of domain architecture, Deacetylase sirtuin-type spans 37-307 (SSNMADFRKL…PEALAPHETG (271 aa)). NAD(+) is bound at residue 58–77 (GAGVSAESGVPTFRGAGGYW). Substrate-binding residues include tyrosine 102 and arginine 105. 140–143 (QNID) is an NAD(+) binding site. Histidine 158 serves as the catalytic Proton acceptor. Zn(2+) contacts are provided by cysteine 166, cysteine 169, cysteine 207, and cysteine 212. NAD(+)-binding positions include 249–251 (GTS), 275–277 (NME), and cysteine 293.

It belongs to the sirtuin family. Class III subfamily. As to quaternary structure, monomer. Homodimer. Interacts with CPS1. Interacts with PCCA. Requires Zn(2+) as cofactor.

The protein localises to the mitochondrion. The protein resides in the cytoplasm. Its subcellular location is the cytosol. It localises to the nucleus. It carries out the reaction N(6)-malonyl-L-lysyl-[protein] + NAD(+) + H2O = 2''-O-malonyl-ADP-D-ribose + nicotinamide + L-lysyl-[protein]. The enzyme catalyses N(6)-succinyl-L-lysyl-[protein] + NAD(+) + H2O = 2''-O-succinyl-ADP-D-ribose + nicotinamide + L-lysyl-[protein]. The catalysed reaction is N(6)-glutaryl-L-lysyl-[protein] + NAD(+) + H2O = 2''-O-glutaryl-ADP-D-ribose + nicotinamide + L-lysyl-[protein]. In terms of biological role, NAD-dependent lysine demalonylase, desuccinylase and deglutarylase that specifically removes malonyl, succinyl and glutaryl groups on target proteins. Activates CPS1 and contributes to the regulation of blood ammonia levels during prolonged fasting: acts by mediating desuccinylation and deglutarylation of CPS1, thereby increasing CPS1 activity in response to elevated NAD levels during fasting. Activates SOD1 by mediating its desuccinylation, leading to reduced reactive oxygen species. Activates SHMT2 by mediating its desuccinylation. Modulates ketogenesis through the desuccinylation and activation of HMGCS2. Has weak NAD-dependent protein deacetylase activity; however this activity may not be physiologically relevant in vivo. Can deacetylate cytochrome c (CYCS) and a number of other proteins in vitro such as UOX. This Canis lupus familiaris (Dog) protein is NAD-dependent protein deacylase sirtuin-5, mitochondrial.